The chain runs to 362 residues: Probable dual-specificity RNA methyltransferase RlmN (362 aa).

The active-site Proton acceptor is the glutamate 105. Positions histidine 111–aspartate 344 constitute a Radical SAM core domain. Cysteine 118 and cysteine 349 are disulfide-bonded. Cysteine 125, cysteine 129, and cysteine 132 together coordinate [4Fe-4S] cluster. Residues glycine 175–glutamate 176, serine 207, serine 230–histidine 232, and asparagine 306 contribute to the S-adenosyl-L-methionine site. The active-site S-methylcysteine intermediate is cysteine 349.

It belongs to the radical SAM superfamily. RlmN family. Requires [4Fe-4S] cluster as cofactor.

Its subcellular location is the cytoplasm. The enzyme catalyses adenosine(2503) in 23S rRNA + 2 reduced [2Fe-2S]-[ferredoxin] + 2 S-adenosyl-L-methionine = 2-methyladenosine(2503) in 23S rRNA + 5'-deoxyadenosine + L-methionine + 2 oxidized [2Fe-2S]-[ferredoxin] + S-adenosyl-L-homocysteine. It carries out the reaction adenosine(37) in tRNA + 2 reduced [2Fe-2S]-[ferredoxin] + 2 S-adenosyl-L-methionine = 2-methyladenosine(37) in tRNA + 5'-deoxyadenosine + L-methionine + 2 oxidized [2Fe-2S]-[ferredoxin] + S-adenosyl-L-homocysteine. Functionally, specifically methylates position 2 of adenine 2503 in 23S rRNA and position 2 of adenine 37 in tRNAs. This is Probable dual-specificity RNA methyltransferase RlmN from Bacillus mycoides (strain KBAB4) (Bacillus weihenstephanensis).